We begin with the raw amino-acid sequence, 182 residues long: Large ribosomal subunit protein uL6 (182 aa).

The protein belongs to the universal ribosomal protein uL6 family. In terms of assembly, part of the 50S ribosomal subunit.

This protein binds to the 23S rRNA, and is important in its secondary structure. It is located near the subunit interface in the base of the L7/L12 stalk, and near the tRNA binding site of the peptidyltransferase center. The chain is Large ribosomal subunit protein uL6 from Dehalococcoides mccartyi (strain ATCC BAA-2266 / KCTC 15142 / 195) (Dehalococcoides ethenogenes (strain 195)).